Consider the following 114-residue polypeptide: MLIVIFHKAIFSNSSLASSTLASSLLISFSSFLFISSVCLFTSSSFFADSVTCSFSTCSFSSTFGCFSSSFLSLSCLMSTLSALISCSACPRLSVFTVVVSASLGSVFTILTDS.

3 helical membrane-spanning segments follow: residues 21-41 (LASS…VCLF), 65-85 (GCFS…SALI), and 93-113 (LSVF…ILTD).

It is found in the membrane. This is an uncharacterized protein from Saccharomyces cerevisiae (strain ATCC 204508 / S288c) (Baker's yeast).